The primary structure comprises 226 residues: MHLSSDEVVLWQSGFLKLNLTIVTTWAVMLLLAGGSWLITRRLSTGITISRWQSVLEIIVTMARRQIGEVGLQKPEKYLPFIATLFLFIATANLCTVIPGYEPPTGSLSTTAALALSVFIAVPLFGIAESGLVGYLKTYAEPTPIMLPFNIVGELTRTMALAVRLFGNMMSGDMILVILLTISPLVFPVLMNILGLLTGMVQAYIFSILATVYIAAATRTREKSTS.

A run of 5 helical transmembrane segments spans residues 20 to 40 (LTIV…WLIT), 78 to 98 (YLPF…CTVI), 113 to 133 (ALAL…SGLV), 174 to 194 (MILV…MNIL), and 196 to 216 (LLTG…YIAA).

This sequence belongs to the ATPase A chain family. F-type ATPases have 2 components, CF(1) - the catalytic core - and CF(0) - the membrane proton channel. CF(1) has five subunits: alpha(3), beta(3), gamma(1), delta(1), epsilon(1). CF(0) has four main subunits: a, b, b' and c.

Its subcellular location is the cell inner membrane. In terms of biological role, key component of the proton channel; it plays a direct role in the translocation of protons across the membrane. The chain is ATP synthase subunit a 1 from Chlorobaculum parvum (strain DSM 263 / NCIMB 8327) (Chlorobium vibrioforme subsp. thiosulfatophilum).